The following is a 311-amino-acid chain: Cytosolic Fe-S cluster assembly factor Nubp1 homolog (311 aa).

Residues 1–21 (MQAPPPEHCPGVESEDAGKGS) are disordered. 4 residues coordinate [4Fe-4S] cluster: cysteine 9, cysteine 23, cysteine 26, and cysteine 32. 63 to 70 (GKGGVGKS) provides a ligand contact to ATP. Residues cysteine 240 and cysteine 243 each coordinate [4Fe-4S] cluster.

It belongs to the Mrp/NBP35 ATP-binding proteins family. NUBP1/NBP35 subfamily. Heterotetramer of 2 Nubp1 and 2 Nubp2 chains. The cofactor is [4Fe-4S] cluster.

It localises to the cytoplasm. In terms of biological role, component of the cytosolic iron-sulfur (Fe/S) protein assembly (CIA) machinery. Required for maturation of extramitochondrial Fe-S proteins. The Nubp1-Nubp2 heterotetramer forms a Fe-S scaffold complex, mediating the de novo assembly of an Fe-S cluster and its transfer to target apoproteins. The sequence is that of Cytosolic Fe-S cluster assembly factor Nubp1 homolog from Drosophila sechellia (Fruit fly).